A 196-amino-acid chain; its full sequence is Golgi to ER traffic protein 1 (196 aa).

Over 1 to 10 the chain is Lumenal; it reads MFLDLHPYTI. A helical transmembrane segment spans residues 11–30; it reads LVSIFIILLVKQIVGRIGKS. Residues 31-114 lie on the Cytoplasmic side of the membrane; sequence TIQEFVWLLY…SIDKLANVLL (84 aa). Residues 76–114 adopt a coiled-coil conformation; that stretch reads AKWTKLNRQADKLTSEIQKLNEEIRQSKASIDKLANVLL. The helical transmembrane segment at 115-135 threads the bilayer; it reads MVLTTLPIWVARIFFRKTHLF. Residues 136–159 are Lumenal-facing; it reads YLRSGIFPRYIEWVLALPFFPSGA. Residues 160 to 176 traverse the membrane as a helical segment; that stretch reads VGLTVWMFAANSVIHNV. Residues 177 to 196 are Cytoplasmic-facing; the sequence is ISLVSFAFEKRVEKPVRQKK.

The protein belongs to the WRB/GET1 family. In terms of assembly, component of the Golgi to ER traffic (GET) complex, which is composed of GET1, GET2 and GET3. Within the complex, GET1 and GET2 form a heterotetramer which is stabilized by phosphatidylinositol binding and which binds to the GET3 homodimer.

Its subcellular location is the endoplasmic reticulum membrane. The protein resides in the golgi apparatus membrane. Functionally, required for the post-translational delivery of tail-anchored (TA) proteins to the endoplasmic reticulum. Together with GET2, acts as a membrane receptor for soluble GET3, which recognizes and selectively binds the transmembrane domain of TA proteins in the cytosol. The GET complex cooperates with the HDEL receptor ERD2 to mediate the ATP-dependent retrieval of resident ER proteins that contain a C-terminal H-D-E-L retention signal from the Golgi to the ER. The protein is Golgi to ER traffic protein 1 of Candida tropicalis (strain ATCC MYA-3404 / T1) (Yeast).